Here is a 1067-residue protein sequence, read N- to C-terminus: Tricorn protease homolog 1 (1067 aa).

Residues threonine 518–isoleucine 551 are disordered. Over residues arginine 530–threonine 540 the composition is skewed to basic and acidic residues. Catalysis depends on histidine 740, which acts as the Charge relay system. The segment at arginine 754 to glutamate 851 is PDZ-like. Residue glycine 914 participates in substrate binding. Residue serine 961 is the Nucleophile of the active site. The Charge relay system role is filled by glutamate 1019.

This sequence belongs to the peptidase S41B family. Forms a homohexameric complex; it is not known if it assembles into higher-order structures.

The protein resides in the cytoplasm. With respect to regulation, stimulated by MgCl2. Functionally, degrades oligopeptides in a sequential manner. The sequence is that of Tricorn protease homolog 1 (tri1) from Streptomyces coelicolor (strain ATCC BAA-471 / A3(2) / M145).